We begin with the raw amino-acid sequence, 620 residues long: Cell fusion protein cfr1 (620 aa).

One can recognise a Fibronectin type-III domain in the interval L79 to M169. A BRCT domain is found at L167–I256. 2 disordered regions span residues Q287 to A566 and K588 to D620. Positions A303–N314 are enriched in polar residues. The span at S315–A330 shows a compositional bias: low complexity. Positions S352–Q375 are enriched in polar residues. The span at M382–N392 shows a compositional bias: basic and acidic residues. Residues L393–E406 show a composition bias toward polar residues. The segment covering N424–T434 has biased composition (low complexity). Polar residues predominate over residues N445–V468. Positions A472 to E484 are enriched in acidic residues. The segment covering N506–G515 has biased composition (polar residues). A compositionally biased stretch (basic and acidic residues) spans T517–P537.

Belongs to the CHS5 family.

The protein localises to the golgi apparatus. In terms of biological role, required for cell fusion, independently of fus1. Appears to have a role in transporting proteins that are involved in mating. May act as a scaffold to retain cell fusion proteins in the cisternae of the Golgi. Degraded at the onset of mating and this leads to release of cell fusion proteins. The sequence is that of Cell fusion protein cfr1 (cfr1) from Schizosaccharomyces pombe (strain 972 / ATCC 24843) (Fission yeast).